The following is a 247-amino-acid chain: MEWRDEGVILGTRRHGETSAIVEVMTCGHGRHMGMVRGGRSRRMQPLLQPGNHVDVSWWARLDEHMGTFTIEPLSFAAARLIETPVALYGIQLAAAHLRLLPERDPHRGLYETLRLIIEHFDDPLAAGELLLRFEVMMLEELGFGLDLKECAATGRKDDLIYVSPKSGRAVCREAGAPWAEKLLSLPSFVNDTALRASCYDDLDRAFTMTGYFLMRHVWEPRAQTPPDSRSGFLNAVGRAINLSQAS.

This sequence belongs to the RecO family.

Involved in DNA repair and RecF pathway recombination. In Brucella abortus (strain 2308), this protein is DNA repair protein RecO.